Here is a 127-residue protein sequence, read N- to C-terminus: uncharacterized protein (127 aa).

It localises to the mitochondrion. This is an uncharacterized protein from Arabidopsis thaliana (Mouse-ear cress).